We begin with the raw amino-acid sequence, 314 residues long: Lysophospholipase D GDPD1 (314 aa).

Topologically, residues 1–3 (MSS) are extracellular. The helical transmembrane segment at 4–24 (TAAFCLLSTLGGYLVTSFLLL) threads the bilayer. The Cytoplasmic segment spans residues 25-195 (KYPALLHQRK…VDKCYKENSD (171 aa)). Residues 40–309 (SRHISHRGGA…DYPTKLKDFL (270 aa)) form the GP-PDE domain. Glutamate 72, aspartate 74, and histidine 87 together coordinate a divalent metal cation. The helical transmembrane segment at 196 to 216 (IPILFSLQRVLLILGLFFTGL) threads the bilayer. At 217–314 (LPFVPIREQF…LKDFLNNFSA (98 aa)) the chain is on the extracellular side.

This sequence belongs to the glycerophosphoryl diester phosphodiesterase family. Widely expressed.

It is found in the cytoplasm. The protein resides in the membrane. Its subcellular location is the perinuclear region. It localises to the endoplasmic reticulum. It catalyses the reaction 1-hexadecanoyl-sn-glycero-3-phosphocholine + H2O = 1-hexadecanoyl-sn-glycero-3-phosphate + choline + H(+). The enzyme catalyses 1-hexadecanoyl-sn-glycero-3-phosphoethanolamine + H2O = 1-hexadecanoyl-sn-glycero-3-phosphate + ethanolamine + H(+). It carries out the reaction N-hexadecanoyl-sn-glycero-3-phosphoethanolamine + H2O = N-hexadecanoylethanolamine + sn-glycerol 3-phosphate + H(+). The catalysed reaction is N-(5Z,8Z,11Z,14Z-eicosatetraenoyl)-1-(9Z-octadecenoyl)-sn-glycero-3-phosphoethanolamine + H2O = N-(5Z,8Z,11Z,14Z-eicosatetraenoyl)-ethanolamine + 1-(9Z-octadecenoyl)-sn-glycero-3-phosphate + H(+). It catalyses the reaction N,1-di-(9Z-octadecenoyl)-sn-glycero-3-phosphoethanolamine + H2O = N-(9Z-octadecenoyl) ethanolamine + 1-(9Z-octadecenoyl)-sn-glycero-3-phosphate + H(+). The enzyme catalyses N-hexadecanoyl-1-(9Z-octadecenoyl)-sn-glycero-3-phosphoethanolamine + H2O = N-hexadecanoylethanolamine + 1-(9Z-octadecenoyl)-sn-glycero-3-phosphate + H(+). It carries out the reaction a 1-O-alkyl-sn-glycero-3-phosphocholine + H2O = a 1-O-alkyl-sn-glycero-3-phosphate + choline + H(+). The catalysed reaction is 1-O-hexadecyl-sn-glycero-3-phosphocholine + H2O = 1-O-hexadecyl-sn-glycero-3-phosphate + choline + H(+). It catalyses the reaction 1-(9Z-octadecenoyl)-sn-glycero-3-phosphocholine + H2O = 1-(9Z-octadecenoyl)-sn-glycero-3-phosphate + choline + H(+). The enzyme catalyses N,1-dihexadecanoyl-sn-glycero-3-phosphoethanolamine + H2O = N-hexadecanoylethanolamine + 1-hexadecanoyl-sn-glycero-3-phosphate + H(+). It carries out the reaction 1-O-(1Z-octadecenyl)-sn-glycero-3-phospho-(N-5Z,8Z,11Z,14Z-eicosatetraenoyl)-ethanolamine + H2O = 1-O-(1Z-octadecenyl)-sn-glycero-3-phosphate + N-(5Z,8Z,11Z,14Z-eicosatetraenoyl)-ethanolamine + H(+). The catalysed reaction is 1-O-(1Z-octadecenyl)-sn-glycero-3-phospho-(N-9Z-octadecenoyl)-ethanolamine + H2O = 1-O-(1Z-octadecenyl)-sn-glycero-3-phosphate + N-(9Z-octadecenoyl) ethanolamine + H(+). It catalyses the reaction 1-O-(1Z-octadecenyl)-sn-glycero-3-phospho-N-hexadecanoyl-ethanolamine + H2O = 1-O-(1Z-octadecenyl)-sn-glycero-3-phosphate + N-hexadecanoylethanolamine + H(+). Its activity is regulated as follows. Lysophospholipase D activity is increased by magnesium and manganese and inhibited by calcium in a concentration dependent manner. Loss of lysophospholipase D activity by addition of EDTA. Its function is as follows. Hydrolyzes lysoglycerophospholipids to produce lysophosphatidic acid (LPA) and the corresponding amines. Shows a preference for 1-O-alkyl-sn-glycero-3-phosphocholine (lyso-PAF), lysophosphatidylethanolamine (lyso-PE) and lysophosphatidylcholine (lyso-PC). May be involved in bioactive N-acylethanolamine biosynthesis from both N-acyl-lysoplasmenylethanolamin (N-acyl-lysoPlsEt) and N-acyl-lysophosphatidylethanolamin (N-acyl-lysoPE). In addition, hydrolyzes glycerophospho-N-acylethanolamine to N-acylethanolamine. Does not display glycerophosphodiester phosphodiesterase activity, since it cannot hydrolyze either glycerophosphoinositol or glycerophosphocholine. In Mus musculus (Mouse), this protein is Lysophospholipase D GDPD1.